We begin with the raw amino-acid sequence, 414 residues long: Probable serine/threonine-protein kinase PBL26 (414 aa).

The S-palmitoyl cysteine moiety is linked to residue Cys-3. Residues 17–41 show a composition bias toward basic and acidic residues; it reads RDSDNSYRRNGEVTGRDNNKTHPEN. Residues 17-55 are disordered; the sequence is RDSDNSYRRNGEVTGRDNNKTHPENPKTVNEQNKNNDED. Positions 79 to 356 constitute a Protein kinase domain; the sequence is FRQECLIGEG…SDVVTALGFL (278 aa). ATP is bound by residues 85-93 and Lys-108; that span reads IGEGGFGRV. Position 153 is a phosphotyrosine (Tyr-153). Residue Asp-206 is the Proton acceptor of the active site. Residue Ser-240 is modified to Phosphoserine. Residue Thr-246 is modified to Phosphothreonine. Tyr-254 carries the phosphotyrosine modification. Positions 364–394 are disordered; that stretch reads ISVPHYDDPPQPSDETSVEDSVAAEERERAV.

The protein belongs to the protein kinase superfamily. Ser/Thr protein kinase family. Post-translationally, palmitoylation at Cys-3 and Cys-6 are required for plasma membrane location.

It is found in the cell membrane. It catalyses the reaction L-seryl-[protein] + ATP = O-phospho-L-seryl-[protein] + ADP + H(+). The enzyme catalyses L-threonyl-[protein] + ATP = O-phospho-L-threonyl-[protein] + ADP + H(+). May be involved in plant defense signaling. The sequence is that of Probable serine/threonine-protein kinase PBL26 from Arabidopsis thaliana (Mouse-ear cress).